Reading from the N-terminus, the 415-residue chain is Mulatexin (415 aa).

The N-terminal stretch at 1-21 (MKFRTLLIIFSLVFLLEIVSA) is a signal peptide. Residues 23-66 (EPQCGRDAGGALCHGNLCCSHWGFCGTTAIYCDVDQGCQSQCWS) form the Chitin-binding type-1 1 domain. Cystine bridges form between Cys-26–Cys-41, Cys-35–Cys-47, Cys-40–Cys-54, and Cys-60–Cys-64. The disordered stretch occupies residues 65–127 (WSSPPPPSPP…PGGPERPDHR (63 aa)). Residues 67-121 (SPPPPSPPPPPPSPPPPSPPPPSPPPPSPPPPSPPPPSPPPPSPPPPSPPPPGGP) show a composition bias toward pro residues. In terms of domain architecture, Chitin-binding type-1 2 spans 125-167 (DHRCGRALGNPPCNPGRCCSIHNWCGSTAAYCRGSSCQYQCWN). Disulfide bonds link Cys-128/Cys-143, Cys-137/Cys-149, Cys-142/Cys-156, and Cys-161/Cys-165. An N-linked (GlcNAc...) asparagine glycan is attached at Asn-264.

In terms of processing, glycosylated.

The protein resides in the secreted. In terms of biological role, chitin-binding protein which slows larval growth when consumed by the lepidopteran species S.ricini and M.brassica, but not when consumed by the mulberry specialist B.mori. Lacks chitinase activity. The chain is Mulatexin from Morus alba (White mulberry).